The sequence spans 282 residues: Sirohydrochlorin cobaltochelatase CbiKC (282 aa).

His-166 functions as the Proton acceptor in the catalytic mechanism. Co(2+) contacts are provided by His-166 and His-228.

Belongs to the CbiK family.

It is found in the cytoplasm. It catalyses the reaction Co-sirohydrochlorin + 2 H(+) = sirohydrochlorin + Co(2+). The enzyme catalyses siroheme + 2 H(+) = sirohydrochlorin + Fe(2+). Its pathway is cofactor biosynthesis; adenosylcobalamin biosynthesis; cob(II)yrinate a,c-diamide from sirohydrochlorin (anaerobic route): step 1/10. It functions in the pathway porphyrin-containing compound metabolism; siroheme biosynthesis; siroheme from sirohydrochlorin: step 1/1. Its function is as follows. Catalyzes the insertion of Co(2+) into sirohydrochlorin as part of the anaerobic pathway to cobalamin biosynthesis. To a lesser extent, is also able to insert Fe(2+) into sirohydrochlorin, yielding siroheme. In Nitratidesulfovibrio vulgaris (strain ATCC 29579 / DSM 644 / CCUG 34227 / NCIMB 8303 / VKM B-1760 / Hildenborough) (Desulfovibrio vulgaris), this protein is Sirohydrochlorin cobaltochelatase CbiKC (cbiKc).